The chain runs to 351 residues: Autoinducer 2 import system permease protein LsrC (351 aa).

9 consecutive transmembrane segments (helical) span residues 14–34, 39–59, 70–90, 93–113, 115–135, 155–175, 213–233, 252–272, and 284–304; these read LLAI…YFSL, MIFS…LVML, ITGL…GLAA, LFAL…VTWL, IPAI…MLLL, ILFS…AMAW, MNGV…GFIP, GISL…AFLL, and LPAW…LVFD.

The protein belongs to the binding-protein-dependent transport system permease family. AraH/RbsC subfamily. The complex is composed of two ATP-binding proteins (LsrA), two transmembrane proteins (LsrC and LsrD) and a solute-binding protein (LsrB).

The protein localises to the cell inner membrane. Functionally, part of the ABC transporter complex LsrABCD involved in autoinducer 2 (AI-2) import. Probably responsible for the translocation of the substrate across the membrane. The chain is Autoinducer 2 import system permease protein LsrC (lsrC) from Yersinia pestis bv. Antiqua (strain Antiqua).